The primary structure comprises 495 residues: ESX-2 secretion system ATPase EccB2 (495 aa).

The chain crosses the membrane as a helical span at residues 43–63 (LALSMVLVAIAAGWMMLLNVL).

The protein belongs to the EccB family. As to quaternary structure, part of the ESX-2 / type VII secretion system (T7SS), which is composed of cytosolic and membrane components.

It is found in the cell membrane. An ATPase. The sequence is that of ESX-2 secretion system ATPase EccB2 (eccB2) from Mycobacterium tuberculosis (strain CDC 1551 / Oshkosh).